We begin with the raw amino-acid sequence, 345 residues long: Anthranilate phosphoribosyltransferase (345 aa).

5-phospho-alpha-D-ribose 1-diphosphate is bound by residues Gly-88, Gly-91–Asp-92, Thr-96, Asn-98–Thr-101, Lys-116–Gly-124, and Ser-128. Position 88 (Gly-88) interacts with anthranilate. Ser-100 is a Mg(2+) binding site. Residue Asn-119 coordinates anthranilate. Residue Arg-174 participates in anthranilate binding. Mg(2+)-binding residues include Asp-233 and Glu-234.

It belongs to the anthranilate phosphoribosyltransferase family. In terms of assembly, homodimer. Mg(2+) serves as cofactor.

The enzyme catalyses N-(5-phospho-beta-D-ribosyl)anthranilate + diphosphate = 5-phospho-alpha-D-ribose 1-diphosphate + anthranilate. Its pathway is amino-acid biosynthesis; L-tryptophan biosynthesis; L-tryptophan from chorismate: step 2/5. Its function is as follows. Catalyzes the transfer of the phosphoribosyl group of 5-phosphorylribose-1-pyrophosphate (PRPP) to anthranilate to yield N-(5'-phosphoribosyl)-anthranilate (PRA). In Prochlorococcus marinus (strain NATL1A), this protein is Anthranilate phosphoribosyltransferase.